The sequence spans 205 residues: Nucleoside triphosphate pyrophosphatase (205 aa).

The active-site Proton acceptor is the D76.

This sequence belongs to the Maf family. A divalent metal cation is required as a cofactor.

The protein resides in the cytoplasm. The catalysed reaction is a ribonucleoside 5'-triphosphate + H2O = a ribonucleoside 5'-phosphate + diphosphate + H(+). It catalyses the reaction a 2'-deoxyribonucleoside 5'-triphosphate + H2O = a 2'-deoxyribonucleoside 5'-phosphate + diphosphate + H(+). Nucleoside triphosphate pyrophosphatase. May have a dual role in cell division arrest and in preventing the incorporation of modified nucleotides into cellular nucleic acids. The chain is Nucleoside triphosphate pyrophosphatase from Orientia tsutsugamushi (strain Boryong) (Rickettsia tsutsugamushi).